Reading from the N-terminus, the 198-residue chain is Phomoidride biosynthesis cluster protein N (198 aa).

The signal sequence occupies residues 1-18 (MILFSIFVALLAATRAQS). N-linked (GlcNAc...) asparagine glycosylation is present at N93.

The protein belongs to the tstN family.

In terms of biological role, phosphatidylethanolamine-binding protein; part of the gene cluster that mediates the biosynthesis of the antihypercholesterolemic agents phomoidrides which are dimeric anhydrides. Within the pathway, tstNB is not essential for dimerization and its function has still to be determined. The pathway begins with the highly reducing polyketide synthase tstA that catalyzes the formation of a C12-fatty acyl-ACP, starting from one acetate and 5 malonate units. The hydrolase tstM is involved in the release of the C12-fatty acyl chain from phiA. The alkylcitrate synthase (ACS) tstJ and the alkylcitrate dehydratase (ACDH) tstI then give rise to decarboxylated monomeric anhydrides by coupling the C12-fatty acyl chain with oxalacetic acid. The cyclase tstC is responsible for the dimerization of the monomeric anhydrides which leads to the production of prephomoidride that contains the characteristic bicyclo[4.3.1]deca-1,6-diene system of phomoidrides. Iterative oxidation catalyzed by the alpha-ketoglutarate-dependent dioxygenase tstK produced then phomoidride A. Finally, the methyltransferase tstE converts phomoidride A to phomoidride B via an acetalization reaction. The phosphatidylethanolamine-binding protein tstB and tstN are not essential for dimerization and their functions have still to be determined. The sequence is that of Phomoidride biosynthesis cluster protein N from Talaromyces stipitatus (strain ATCC 10500 / CBS 375.48 / QM 6759 / NRRL 1006) (Penicillium stipitatum).